A 93-amino-acid polypeptide reads, in one-letter code: Cobalt transport protein CbiN (93 aa).

2 consecutive transmembrane segments (helical) span residues L5 to G25 and L63 to C83.

It belongs to the CbiN family. As to quaternary structure, forms an energy-coupling factor (ECF) transporter complex composed of an ATP-binding protein (A component, CbiO), a transmembrane protein (T component, CbiQ) and 2 possible substrate-capture proteins (S components, CbiM and CbiN) of unknown stoichimetry.

It is found in the cell inner membrane. It functions in the pathway cofactor biosynthesis; adenosylcobalamin biosynthesis. Functionally, part of the energy-coupling factor (ECF) transporter complex CbiMNOQ involved in cobalt import. In Salmonella agona (strain SL483), this protein is Cobalt transport protein CbiN.